Here is a 366-residue protein sequence, read N- to C-terminus: Capsular polysaccharide phosphotransferase LcbA (366 aa).

It belongs to the stealth family.

This Neisseria meningitidis protein is Capsular polysaccharide phosphotransferase LcbA (lcbA).